The following is a 223-amino-acid chain: Peptidyl-prolyl cis-trans isomerase, mitochondrial (223 aa).

A mitochondrion-targeting transit peptide spans 1–44; that stretch reads MFGPRHFSVLKTTGSLVSSTFSSSLKPTATFSCARAFSQTSSIM. A PPIase cyclophilin-type domain is found at 62-222; sequence NKPTSEIKAQ…KKPTIVDCGA (161 aa).

Belongs to the cyclophilin-type PPIase family.

The protein resides in the mitochondrion. It localises to the cytoplasm. The enzyme catalyses [protein]-peptidylproline (omega=180) = [protein]-peptidylproline (omega=0). Binds cyclosporin A (CsA). CsA mediates some of its effects via an inhibitory action on PPIase. In terms of biological role, PPIases accelerate the folding of proteins. It catalyzes the cis-trans isomerization of proline imidic peptide bonds in oligopeptides. The sequence is that of Peptidyl-prolyl cis-trans isomerase, mitochondrial (csr-1) from Neurospora crassa (strain ATCC 24698 / 74-OR23-1A / CBS 708.71 / DSM 1257 / FGSC 987).